The following is a 912-amino-acid chain: Putative respiratory burst oxidase homolog protein J (912 aa).

2 disordered regions span residues 1–51 and 73–112; these read MKNN…GGGI and WRKS…RTTS. Over 1–323 the chain is Cytoplasmic; the sequence is MKNNKKVGTE…VVVTAELMYE (323 aa). Composition is skewed to polar residues over residues 29 to 44 and 78 to 87; these read SVKQ…NPES and NLGSPSTRKS. EF-hand-like regions lie at residues 147–155 and 181–193; these read AVDGRLPKD and RQIK…DKEQ. The EF-hand domain maps to 205 to 240; sequence DLDCRLQIFFDMCDKDGDGKLTEEEVKEVIVLSASA. Ca(2+) is bound by residues aspartate 218, aspartate 220, aspartate 222, lysine 224, and glutamate 229. Phosphoserine is present on serine 294. Residues 324 to 344 form a helical membrane-spanning segment; it reads HWKKIWVVTLWLAVNVVLFMW. Topologically, residues 345–363 are extracellular; sequence KYEEFTTSPLYNITGRCLC. A helical membrane pass occupies residues 364–384; that stretch reads AAKGTAEILKLNMALILVPVL. The Ferric oxidoreductase domain occupies 366-523; it reads KGTAEILKLN…LLVIAYALLI (158 aa). Topologically, residues 385-410 are cytoplasmic; the sequence is RRTLTFLRSTFLNHLIPFDDNINFHK. A helical transmembrane segment spans residues 411–431; sequence LIAVAIAVISLLHTALHMLCN. Residues 432–458 are Extracellular-facing; sequence YPRLSSCPYNFYSDYAGNLLGAKQPTY. The helical transmembrane segment at 459-479 threads the bilayer; sequence LGLMLTPVSVTGVLMIIFMGI. Topologically, residues 480 to 510 are cytoplasmic; that stretch reads SFTLAMHYFRRNIVKLPIPFNRLAGFNSFWY. Residues 511–531 form a helical membrane-spanning segment; it reads AHHLLVIAYALLIIHGYILII. Topologically, residues 532–697 are extracellular; that stretch reads EKPWYQKTTW…PYGAPAQSYQ (166 aa). In terms of domain architecture, FAD-binding FR-type spans 562-695; sequence EHNHRVHIIK…KGPYGAPAQS (134 aa). A helical transmembrane segment spans residues 698–718; it reads KFDILLLIGLGIGATPFISIL. At 719-912 the chain is on the cytoplasmic side; sequence KDMLNNLKPG…TRFTFHKENF (194 aa).

The protein belongs to the RBOH (TC 5.B.1.3) family. In terms of assembly, monomer and homodimer.

The protein resides in the membrane. Functionally, calcium-dependent NADPH oxidase that generates superoxide. The protein is Putative respiratory burst oxidase homolog protein J (RBOHJ) of Arabidopsis thaliana (Mouse-ear cress).